Reading from the N-terminus, the 144-residue chain is Large ribosomal subunit protein uL15 (144 aa).

Residues Met1–Phe49 form a disordered region.

It belongs to the universal ribosomal protein uL15 family. Part of the 50S ribosomal subunit.

Binds to the 23S rRNA. The protein is Large ribosomal subunit protein uL15 of Chlamydia trachomatis serovar A (strain ATCC VR-571B / DSM 19440 / HAR-13).